A 313-amino-acid polypeptide reads, in one-letter code: Ketimine reductase mu-crystallin (313 aa).

Arg-47 serves as a coordination point for 3,3',5-triiodo-L-thyronine. The NADPH site is built by Ser-90, His-91, Arg-118, Ala-143, Val-145, Gln-146, Asn-167, Arg-168, Thr-169, Asn-172, Thr-204, Met-205, and Val-225. Glu-256 provides a ligand contact to 3,3',5-triiodo-L-thyronine. Ser-291 lines the NADPH pocket.

This sequence belongs to the ornithine cyclodeaminase/mu-crystallin family. As to quaternary structure, homodimer. Binds the thyroid hormone triiodothyronine (T3); T3 binding inhibits enzymatic activity.

Its subcellular location is the cytoplasm. The enzyme catalyses L-pipecolate + NADP(+) = Delta(1)-piperideine-2-carboxylate + NADPH + H(+). It carries out the reaction L-pipecolate + NAD(+) = Delta(1)-piperideine-2-carboxylate + NADH + H(+). The catalysed reaction is L-proline + NADP(+) = 1-pyrroline-2-carboxylate + NADPH + H(+). It catalyses the reaction L-proline + NAD(+) = 1-pyrroline-2-carboxylate + NADH + H(+). The enzyme catalyses (3R)-1,4-thiomorpholine-3-carboxylate + NAD(+) = 3,4-dehydrothiomorpholine-3-carboxylate + NADH + 2 H(+). It carries out the reaction (3R)-1,4-thiomorpholine-3-carboxylate + NADP(+) = 3,4-dehydrothiomorpholine-3-carboxylate + NADPH + 2 H(+). The catalysed reaction is (S)-cystathionine ketimine + NADH + 2 H(+) = (3R,5S)-2,3,5,6,7-pentahydro-1,4-thiazepine-3,5-dicarboxylate + NAD(+). It catalyses the reaction (S)-cystathionine ketimine + NADPH + 2 H(+) = (3R,5S)-2,3,5,6,7-pentahydro-1,4-thiazepine-3,5-dicarboxylate + NADP(+). The enzyme catalyses (R)-lanthionine ketimine + NADPH + 2 H(+) = (3R,5R)-1,4-thiomorpholine-3,5-dicarboxylate + NADP(+). It carries out the reaction Delta(2)-thiazoline-2-carboxylate + NADPH + 2 H(+) = L-thiazolidine-2-carboxylate + NADP(+). In terms of biological role, catalyzes the NAD(P)H-dependent reduction of imine double bonds of a number of cyclic ketimine substrates, including sulfur-containing cyclic ketimines. Under physiological conditions, it efficiently catalyzes delta(1)-piperideine-2-carboxylate (P2C) and delta(1)-pyrroline-2-carboxylate (Pyr2C) reduction, suggesting a central role in lysine and glutamate metabolism. Additional substrates are delta(2)-thiazoline-2-carboxylate (T2C), 3,4-dehydrothiomorpholine-3-carboxylate (AECK), and (R)-lanthionine ketimine (LK) that is reduced at very low rate compared to other substrates. Also catalyzes the NAD(P)H-dependent reduction of (S)-cystathionine ketimine (CysK). This chain is Ketimine reductase mu-crystallin, found in Rattus norvegicus (Rat).